The sequence spans 984 residues: MDDRYPALQRAQLRLDFIHANSTTHSFLFGALAELLDNARDAGAERLDVFSVDNEKLQGGFMLCFLDDGCGMSPEEASDIIYFGRSKKRLSTLKFIGQYGNGLKSGSMRIGKDFILFTKKEETMTCVFFSQTFCEEESLSEVVVPMPSWLIRTRESVTDDPQKFAMELSIIYKYSPFKTEAELMQQFDVIYGKCGTLLVIYNLKLLLNGEPELDVKTDKEDILMAGALEDFPARWSFRAYTSVLYFNPWMRIFIQAKRVKTKHLCYCLYRPRKYLYVTSSFKGAFKDEVKKAEEAVKIAESILKEAQIKVNQCDRTSLSSAKDVLQRALEDVEAKQKNLKEKQRELKTARTLSLFYGVNVENRSQAGMFIYSNNRLIKMHEKVGSQLKLKSLLGAGVVGIVNIPLEVMEPSHNKQEFLNVQEYNHLLKVMGQYLVQYCKDTGINNRNLTLFCNEFGYQNDIDVEKPLNSFQYQRRQAMGIPFIIQCDLCLKWRVLPSSTNYQEKEFFDIWICANNPNRLENSCHQVECLPSIPLGTMSTISPSKNEKEKQLRESVIKYQNRLAEQQPQPQFIPVDEITVTSTCLTSAHKENTKTQKIRLLGDDLKHESLSSFELSASRRGQKRNIEETDSDVEYISETKIMKKSMEEKMNSQQQRIPVALPENVKLAERSQRSQIANITTVWRAQPTEGCLKNAQAASWEMKRKQSLNFVEECKVLTEDENTSDSDIILVSDKSNTDVSLKQEKKEIPLLNQEKQELCNDVLAMKRSSSLPSWKSLLNVPMEDVNLSSGHIARVSVSGSCKVASSPASSQSTPVKETVRKLKSKLREILLYFFPEHQLPSELEEPALSCELEQCPEQMNKKLKMCFNQIQNTYMVQYEKKIKRKLQSIIYDSNTRGIHNEISLGQCENKRKISEDKLKNLRIKLALLLQKLQLGGPEGDLEQTDTYLEALLKEDNLLFQNNLNKVTIDARHRLPLEKNEKTSEN.

A coiled-coil region spans residues 284–353; it reads AFKDEVKKAE…RELKTARTLS (70 aa). A CW-type zinc finger spans residues 477 to 531; it reads AMGIPFIIQCDLCLKWRVLPSSTNYQEKEFFDIWICANNPNRLENSCHQVECLPS. The Zn(2+) site is built by Cys486, Cys489, Cys512, and Cys523. Coiled coils occupy residues 737–761 and 900–934; these read DVSL…CNDV and EISL…LQLG.

It localises to the nucleus. In terms of biological role, required for spermatogenesis. Essential for de novo DNA methylation and silencing of transposable elements in the male embryonic germ cells. This chain is MORC family CW-type zinc finger protein 1, found in Homo sapiens (Human).